The sequence spans 591 residues: Oligopeptide-binding protein OppA (591 aa).

The protein belongs to the bacterial solute-binding protein 5 family. As to quaternary structure, the complex is composed of an ATP-binding protein (OppD), two transmembrane proteins (OppB and OppC) and a solute-binding protein (OppA).

It localises to the periplasm. In terms of biological role, part of the ABC transporter complex OppABCD involved in the uptake of oligopeptides. Peptide-binding protein that shows broad specificity but a moderate preference for hydrophobic oligopeptides and those that are 6-16 amino acids long. This is Oligopeptide-binding protein OppA from Mycobacterium bovis (strain ATCC BAA-935 / AF2122/97).